A 121-amino-acid polypeptide reads, in one-letter code: Holo-[acyl-carrier-protein] synthase (121 aa).

The Mg(2+) site is built by Asp-8 and Glu-58.

This sequence belongs to the P-Pant transferase superfamily. AcpS family. Mg(2+) is required as a cofactor.

The protein localises to the cytoplasm. The catalysed reaction is apo-[ACP] + CoA = holo-[ACP] + adenosine 3',5'-bisphosphate + H(+). Its function is as follows. Transfers the 4'-phosphopantetheine moiety from coenzyme A to a Ser of acyl-carrier-protein. This chain is Holo-[acyl-carrier-protein] synthase, found in Bacillus velezensis (strain DSM 23117 / BGSC 10A6 / LMG 26770 / FZB42) (Bacillus amyloliquefaciens subsp. plantarum).